The primary structure comprises 125 residues: Holo-[acyl-carrier-protein] synthase (125 aa).

Asp8 and Glu57 together coordinate Mg(2+).

This sequence belongs to the P-Pant transferase superfamily. AcpS family. The cofactor is Mg(2+).

Its subcellular location is the cytoplasm. It catalyses the reaction apo-[ACP] + CoA = holo-[ACP] + adenosine 3',5'-bisphosphate + H(+). Functionally, transfers the 4'-phosphopantetheine moiety from coenzyme A to a Ser of acyl-carrier-protein. The polypeptide is Holo-[acyl-carrier-protein] synthase (Geotalea daltonii (strain DSM 22248 / JCM 15807 / FRC-32) (Geobacter daltonii)).